Here is a 223-residue protein sequence, read N- to C-terminus: Pyridoxal phosphate homeostasis protein (223 aa).

Residue K36 is modified to N6-(pyridoxal phosphate)lysine.

Belongs to the pyridoxal phosphate-binding protein YggS/PROSC family. As to quaternary structure, monomer.

In terms of biological role, pyridoxal 5'-phosphate (PLP)-binding protein, which is involved in PLP homeostasis. The chain is Pyridoxal phosphate homeostasis protein from Buchnera aphidicola subsp. Baizongia pistaciae (strain Bp).